Here is a 270-residue protein sequence, read N- to C-terminus: 3-phenylpropionate-dihydrodiol/cinnamic acid-dihydrodiol dehydrogenase (270 aa).

Residue 10-34 (FITGGGSGLGLALVERFIEEGAQVA) participates in NAD(+) binding. Ser-143 provides a ligand contact to substrate. Tyr-156 (proton acceptor) is an active-site residue.

Belongs to the short-chain dehydrogenases/reductases (SDR) family.

It catalyses the reaction 3-(cis-5,6-dihydroxycyclohexa-1,3-dien-1-yl)propanoate + NAD(+) = 3-(2,3-dihydroxyphenyl)propanoate + NADH + H(+). The catalysed reaction is (2E)-3-(cis-5,6-dihydroxycyclohexa-1,3-dien-1-yl)prop-2-enoate + NAD(+) = (2E)-3-(2,3-dihydroxyphenyl)prop-2-enoate + NADH + H(+). Its pathway is aromatic compound metabolism; 3-phenylpropanoate degradation. Its function is as follows. Converts 3-phenylpropionate-dihydrodiol (PP-dihydrodiol) and cinnamic acid-dihydrodiol (CI-dihydrodiol) into 3-(2,3-dihydroxylphenyl)propanoic acid (DHPP) and 2,3-dihydroxicinnamic acid (DHCI), respectively. The protein is 3-phenylpropionate-dihydrodiol/cinnamic acid-dihydrodiol dehydrogenase of Shigella sonnei (strain Ss046).